The sequence spans 183 residues: MNKLIPVPREFFARDTNVVSTELIGKALYFQGKTAIITETESYIGQNDPACHAARGRTKRTDIMFGPAGFSYVYLIYGMYYCLNFVTEAKGFPAATLIRGVHVISPENLYLNGPGKLCKYLGINISHNKCDLINNNEFFVGDIGLKLPYSTTARIGITKGTDKLWRYVVTDITNLISQYNVQP.

This sequence belongs to the DNA glycosylase MPG family.

This Rickettsia africae (strain ESF-5) protein is Putative 3-methyladenine DNA glycosylase.